A 440-amino-acid chain; its full sequence is Ribulose bisphosphate carboxylase large chain (440 aa).

Lys-4 bears the N6,N6,N6-trimethyllysine mark. 2 residues coordinate substrate: Asn-113 and Thr-163. Catalysis depends on Lys-165, which acts as the Proton acceptor. Lys-167 serves as a coordination point for substrate. Lys-191, Asp-193, and Glu-194 together coordinate Mg(2+). Lys-191 bears the N6-carboxylysine mark. His-284 (proton acceptor) is an active-site residue. The substrate site is built by Arg-285, His-317, and Ser-369.

It belongs to the RuBisCO large chain family. Type I subfamily. As to quaternary structure, heterohexadecamer of 8 large chains and 8 small chains; disulfide-linked. The disulfide link is formed within the large subunit homodimers. Mg(2+) is required as a cofactor. The disulfide bond which can form in the large chain dimeric partners within the hexadecamer appears to be associated with oxidative stress and protein turnover.

The protein resides in the plastid. It localises to the chloroplast. It catalyses the reaction 2 (2R)-3-phosphoglycerate + 2 H(+) = D-ribulose 1,5-bisphosphate + CO2 + H2O. It carries out the reaction D-ribulose 1,5-bisphosphate + O2 = 2-phosphoglycolate + (2R)-3-phosphoglycerate + 2 H(+). RuBisCO catalyzes two reactions: the carboxylation of D-ribulose 1,5-bisphosphate, the primary event in carbon dioxide fixation, as well as the oxidative fragmentation of the pentose substrate in the photorespiration process. Both reactions occur simultaneously and in competition at the same active site. The polypeptide is Ribulose bisphosphate carboxylase large chain (Pteris vittata (Chinese ladder brake)).